Reading from the N-terminus, the 348-residue chain is Protein RecA (348 aa).

64–71 contacts ATP; it reads GPESSGKT. Residues 325–335 show a composition bias toward basic and acidic residues; it reads YEIDGSSKEPL. The tract at residues 325–348 is disordered; sequence YEIDGSSKEPLDEKEETLSLLDDE.

Belongs to the RecA family.

The protein resides in the cytoplasm. Its function is as follows. Can catalyze the hydrolysis of ATP in the presence of single-stranded DNA, the ATP-dependent uptake of single-stranded DNA by duplex DNA, and the ATP-dependent hybridization of homologous single-stranded DNAs. It interacts with LexA causing its activation and leading to its autocatalytic cleavage. The chain is Protein RecA from Listeria monocytogenes serotype 1/2a (strain 10403S).